Here is a 163-residue protein sequence, read N- to C-terminus: Xanthine-guanine phosphoribosyltransferase (163 aa).

5-phospho-alpha-D-ribose 1-diphosphate-binding positions include 43–44 (RG) and 95–103 (DDLADTGGT). Residue aspartate 96 participates in Mg(2+) binding. Guanine is bound by residues aspartate 99 and isoleucine 142. Aspartate 99 and isoleucine 142 together coordinate xanthine. GMP contacts are provided by residues 99 to 103 (DTGGT) and 141 to 142 (WI).

Belongs to the purine/pyrimidine phosphoribosyltransferase family. XGPT subfamily. As to quaternary structure, homotetramer. It depends on Mg(2+) as a cofactor.

It localises to the cell inner membrane. It carries out the reaction GMP + diphosphate = guanine + 5-phospho-alpha-D-ribose 1-diphosphate. The catalysed reaction is XMP + diphosphate = xanthine + 5-phospho-alpha-D-ribose 1-diphosphate. It catalyses the reaction IMP + diphosphate = hypoxanthine + 5-phospho-alpha-D-ribose 1-diphosphate. It functions in the pathway purine metabolism; GMP biosynthesis via salvage pathway; GMP from guanine: step 1/1. It participates in purine metabolism; XMP biosynthesis via salvage pathway; XMP from xanthine: step 1/1. Functionally, purine salvage pathway enzyme that catalyzes the transfer of the ribosyl-5-phosphate group from 5-phospho-alpha-D-ribose 1-diphosphate (PRPP) to the N9 position of the 6-oxopurines guanine and xanthine to form the corresponding ribonucleotides GMP (guanosine 5'-monophosphate) and XMP (xanthosine 5'-monophosphate), with the release of PPi. To a lesser extent, also acts on hypoxanthine. In Nitratidesulfovibrio vulgaris (strain ATCC 29579 / DSM 644 / CCUG 34227 / NCIMB 8303 / VKM B-1760 / Hildenborough) (Desulfovibrio vulgaris), this protein is Xanthine-guanine phosphoribosyltransferase.